Consider the following 430-residue polypeptide: GTPase Obg (430 aa).

The 158-residue stretch at M1–I158 folds into the Obg domain. The 172-residue stretch at A159 to K330 folds into the OBG-type G domain. GTP is bound by residues G165 to S172, F190 to T194, D212 to G215, N282 to D285, and S311 to A313. Residues S172 and T192 each contribute to the Mg(2+) site. Residues K351–N430 enclose the OCT domain.

Belongs to the TRAFAC class OBG-HflX-like GTPase superfamily. OBG GTPase family. Monomer. Mg(2+) is required as a cofactor.

The protein localises to the cytoplasm. In terms of biological role, an essential GTPase which binds GTP, GDP and possibly (p)ppGpp with moderate affinity, with high nucleotide exchange rates and a fairly low GTP hydrolysis rate. Plays a role in control of the cell cycle, stress response, ribosome biogenesis and in those bacteria that undergo differentiation, in morphogenesis control. This Alkaliphilus oremlandii (strain OhILAs) (Clostridium oremlandii (strain OhILAs)) protein is GTPase Obg.